The chain runs to 361 residues: tRNA N6-adenosine threonylcarbamoyltransferase (361 aa).

The Fe cation site is built by H110 and H114. Residues 132–136 (LVSGG), D165, G178, D182, and N284 contribute to the substrate site. Residue D312 participates in Fe cation binding.

It belongs to the KAE1 / TsaD family. The cofactor is Fe(2+).

Its subcellular location is the cytoplasm. It carries out the reaction L-threonylcarbamoyladenylate + adenosine(37) in tRNA = N(6)-L-threonylcarbamoyladenosine(37) in tRNA + AMP + H(+). In terms of biological role, required for the formation of a threonylcarbamoyl group on adenosine at position 37 (t(6)A37) in tRNAs that read codons beginning with adenine. Is involved in the transfer of the threonylcarbamoyl moiety of threonylcarbamoyl-AMP (TC-AMP) to the N6 group of A37, together with TsaE and TsaB. TsaD likely plays a direct catalytic role in this reaction. In Desulfovibrio desulfuricans (strain ATCC 27774 / DSM 6949 / MB), this protein is tRNA N6-adenosine threonylcarbamoyltransferase.